Here is a 274-residue protein sequence, read N- to C-terminus: Outer surface protein A (274 aa).

The N-terminal stretch at 1–16 (MKKYLLGIGLILALIA) is a signal peptide. The N-palmitoyl cysteine moiety is linked to residue Cys-17. Cys-17 is lipidated: S-diacylglycerol cysteine.

This sequence belongs to the OspA lipoprotein family.

Its subcellular location is the cell outer membrane. It is found in the cell surface. This is Outer surface protein A from Borreliella burgdorferi (Lyme disease spirochete).